Consider the following 91-residue polypeptide: Potassium channel toxin Meg-beta-KTx1 (91 aa).

Positions methionine 1–cysteine 19 are cleaved as a signal peptide. Residues glycine 20 to glutamine 27 constitute a propeptide that is removed on maturation. Positions glutamine 54–phenylalanine 91 constitute a BetaSPN-type CS-alpha/beta domain. 3 disulfide bridges follow: cysteine 57–cysteine 78, cysteine 64–cysteine 83, and cysteine 68–cysteine 85.

Belongs to the long chain scorpion toxin family. Class 1 subfamily. As to expression, expressed by the venom gland.

It localises to the secreted. Its function is as follows. Inhibits voltage-gated potassium channel. In Mesobuthus gibbosus (Mediterranean checkered scorpion), this protein is Potassium channel toxin Meg-beta-KTx1.